A 205-amino-acid polypeptide reads, in one-letter code: Lymphotoxin-alpha (205 aa).

The N-terminal stretch at 1 to 34 is a signal peptide; it reads MTPPERLFLPRVRGTTLHLLLLGLLLVLLPGAQG. A glycan (O-linked (GalNAc...) threonine) is linked at T41. The THD domain occupies 63–205; the sequence is PAAHLIGDPS…STVFFGAFAL (143 aa). The N-linked (GlcNAc...) asparagine glycan is linked to N96.

This sequence belongs to the tumor necrosis factor family. Homotrimer, and heterotrimer of either two LTB and one LTA subunits or (less prevalent) two LTA and one LTB subunits. Interacts with TNFRSF14.

The protein resides in the secreted. It is found in the membrane. Its function is as follows. Cytokine that in its homotrimeric form binds to TNFRSF1A/TNFR1, TNFRSF1B/TNFBR and TNFRSF14/HVEM. In its heterotrimeric form with LTB binds to TNFRSF3/LTBR. Lymphotoxin is produced by lymphocytes and is cytotoxic for a wide range of tumor cells in vitro and in vivo. The polypeptide is Lymphotoxin-alpha (LTA) (Pan troglodytes (Chimpanzee)).